Reading from the N-terminus, the 465-residue chain is MAELISKEGNKVEFKVSVPAAEVNRAYDQVWAGLARDVRVPGFRPGKAPRKVIENRVGKGYVESQVRDRLLETHYSQGLRELGLNLVDATVDPQDVQSGQAFEFTVKGETYPEVKLGDWQGLKVSAQAPEITDEVLEQTLSDLRERNASFEKAERPIEAADQVTIQELGEGDSEEGGSYPIYLDMAEEHVRNALLGKSAGDVVDITVPAHQHGDHEHAEHTVRVKVVEVSSKKLQDLNDEFATSLNYESMDKLRTDLREELERRAQQEGDNLRREELVGHLVEGMTVEIPQALIDRRREGMMSEIQDDLRRQGVQWKEYEAFMQEQGKLDEFEADLTKNAETRVRRDLALEQLATDLNAQVNEAEFNQTLMNLAQANGMNVQQLVQQLGQDGVQSYYISLLRERGLQRALAQLSGEGQSTEAASPKATGTEAAGTEQSEPAQTETAQNDAGQTETAQSEGEQQSE.

One can recognise a PPIase FKBP-type domain in the interval 160–235 (ADQVTIQELG…VVEVSSKKLQ (76 aa)). Residues 412 to 465 (QLSGEGQSTEAASPKATGTEAAGTEQSEPAQTETAQNDAGQTETAQSEGEQQSE) form a disordered region. Polar residues predominate over residues 435–465 (TEQSEPAQTETAQNDAGQTETAQSEGEQQSE).

Belongs to the FKBP-type PPIase family. Tig subfamily. In terms of assembly, binds to the 50S ribosomal subunit via interactions with ribosomal protein L23. Also interacts with 23S rRNA and proteins L24 and L29 when complexed with the ribosome.

The protein localises to the cytoplasm. The catalysed reaction is [protein]-peptidylproline (omega=180) = [protein]-peptidylproline (omega=0). Involved in protein export. Acts as a chaperone by maintaining the newly synthesized protein in an open conformation. Functions as a peptidyl-prolyl cis-trans isomerase. Probably changes conformation upon binding to the ribosome (maybe in particular due to interaction with L24), exposing a hydrophobic crevice that is probably important for its chaperone activity. The protein is Trigger factor (tig) of Deinococcus radiodurans (strain ATCC 13939 / DSM 20539 / JCM 16871 / CCUG 27074 / LMG 4051 / NBRC 15346 / NCIMB 9279 / VKM B-1422 / R1).